The sequence spans 195 residues: Aminoglycoside 2'-N-acetyltransferase (195 aa).

The N-acetyltransferase domain occupies 21–180 (VHTSDLDQET…VGLPAGMELD (160 aa)). Substrate is bound by residues aspartate 45 and 92-93 (EA). CoA-binding positions include 94 to 96 (VAV) and 101 to 106 (RGQGLA). Residues serine 127 and 161–162 (ED) each bind substrate.

It belongs to the AAC(2')-I acetyltransferase family. Homodimer.

Its function is as follows. Confers resistance to gentamicin, tobramycin, dibekacin, netilmicin, and 6'-N-ethylnetilmicin. The sequence is that of Aminoglycoside 2'-N-acetyltransferase (aac) from Mycolicibacterium fortuitum (Mycobacterium fortuitum).